The primary structure comprises 233 residues: Enolase-phosphatase E1 (233 aa).

Residues D6 and E8 each coordinate Mg(2+). Substrate-binding positions include 128-129 (SS) and K163. Residue D188 coordinates Mg(2+).

Belongs to the HAD-like hydrolase superfamily. MasA/MtnC family. In terms of assembly, monomer. Requires Mg(2+) as cofactor.

The protein resides in the cytoplasm. It localises to the nucleus. It carries out the reaction 5-methylsulfanyl-2,3-dioxopentyl phosphate + H2O = 1,2-dihydroxy-5-(methylsulfanyl)pent-1-en-3-one + phosphate. It functions in the pathway amino-acid biosynthesis; L-methionine biosynthesis via salvage pathway; L-methionine from S-methyl-5-thio-alpha-D-ribose 1-phosphate: step 3/6. It participates in amino-acid biosynthesis; L-methionine biosynthesis via salvage pathway; L-methionine from S-methyl-5-thio-alpha-D-ribose 1-phosphate: step 4/6. Functionally, bifunctional enzyme that catalyzes the enolization of 2,3-diketo-5-methylthiopentyl-1-phosphate (DK-MTP-1-P) into the intermediate 2-hydroxy-3-keto-5-methylthiopentenyl-1-phosphate (HK-MTPenyl-1-P), which is then dephosphorylated to form the acireductone 1,2-dihydroxy-3-keto-5-methylthiopentene (DHK-MTPene). In Yarrowia lipolytica (strain CLIB 122 / E 150) (Yeast), this protein is Enolase-phosphatase E1.